A 239-amino-acid polypeptide reads, in one-letter code: Homeobox-leucine zipper protein HOX12 (239 aa).

Residues 25 to 65 (ATSGGEQKKARQRRRRKVKPEAAAALAGESGGDEQAKKRRL) form a disordered region. Residues 58-117 (EQAKKRRLSDEQARFLEMSFKKERKLETPRKVQLAAELGLDAKQVAVWFQNRRARHKSKL) constitute a DNA-binding region (homeobox). Positions 107-168 (QNRRARHKSK…KLAAVAAATT (62 aa)) form a coiled coil.

It belongs to the HD-ZIP homeobox family. Class I subfamily. Expressed in seedlings, roots, stems, leaf sheaths and panicles.

The protein resides in the nucleus. In terms of biological role, probable transcription factor. This chain is Homeobox-leucine zipper protein HOX12 (HOX12), found in Oryza sativa subsp. japonica (Rice).